Reading from the N-terminus, the 335-residue chain is 2-keto-3-deoxygluconate permease (335 aa).

10 consecutive transmembrane segments (helical) span residues 10 to 30 (IPGG…TAAP), 42 to 62 (GIIT…GASI), 77 to 97 (LVLT…QLLP), 100 to 120 (GIEV…AMDM), 141 to 161 (AFVL…LGSA), 163 to 183 (LASF…IGFA), 200 to 220 (QTLI…GVIL), 224 to 244 (LLGI…LIIA), 254 to 274 (TAGL…VIIA), and 289 to 309 (ALVA…TAMY).

This sequence belongs to the KdgT transporter family.

It localises to the cell inner membrane. The enzyme catalyses 2-dehydro-3-deoxy-D-gluconate(in) + H(+)(in) = 2-dehydro-3-deoxy-D-gluconate(out) + H(+)(out). Functionally, catalyzes the proton-dependent uptake of 2-keto-3-deoxygluconate (KDG) into the cell. The sequence is that of 2-keto-3-deoxygluconate permease from Tolumonas auensis (strain DSM 9187 / NBRC 110442 / TA 4).